The sequence spans 747 residues: AMP deaminase 1 (747 aa).

Threonine 81 carries the post-translational modification Phosphothreonine. Serine 85 carries the post-translational modification Phosphoserine. Residue tyrosine 216 is modified to Phosphotyrosine. Zn(2+) contacts are provided by histidine 303 and histidine 305. Residues histidine 305 and 374-379 (KFNDKY) each bind substrate. Serine 441 is modified (phosphoserine). Histidine 572 is a binding site for Zn(2+). Residue glutamate 575 participates in substrate binding. The active-site Proton acceptor is histidine 594. Aspartate 649 is a Zn(2+) binding site. A substrate-binding site is contributed by 650 to 653 (DPMQ).

The protein belongs to the metallo-dependent hydrolases superfamily. Adenosine and AMP deaminases family. In terms of assembly, homotetramer. Requires Zn(2+) as cofactor.

It carries out the reaction AMP + H2O + H(+) = IMP + NH4(+). It participates in purine metabolism; IMP biosynthesis via salvage pathway; IMP from AMP: step 1/1. In terms of biological role, AMP deaminase plays a critical role in energy metabolism. In Rattus norvegicus (Rat), this protein is AMP deaminase 1.